Here is a 442-residue protein sequence, read N- to C-terminus: GTPase Obg (442 aa).

Residues 1–158 (MFYDQARIFV…HWLELELKLL (158 aa)) enclose the Obg domain. An OBG-type G domain is found at 159–329 (ADVGLVGFPN…LIYHVHKGLE (171 aa)). Residues 165 to 172 (GFPNVGKS), 190 to 194 (FTTLE), 212 to 215 (DIPG), 282 to 285 (NKMD), and 310 to 312 (SAA) contribute to the GTP site. S172 and T192 together coordinate Mg(2+). Residues 349 to 427 (FTGKTEERFK…IGDLDFDFIE (79 aa)) enclose the OCT domain.

It belongs to the TRAFAC class OBG-HflX-like GTPase superfamily. OBG GTPase family. In terms of assembly, monomer. Mg(2+) serves as cofactor.

The protein localises to the cytoplasm. In terms of biological role, an essential GTPase which binds GTP, GDP and possibly (p)ppGpp with moderate affinity, with high nucleotide exchange rates and a fairly low GTP hydrolysis rate. Plays a role in control of the cell cycle, stress response, ribosome biogenesis and in those bacteria that undergo differentiation, in morphogenesis control. This chain is GTPase Obg, found in Heliobacterium modesticaldum (strain ATCC 51547 / Ice1).